The primary structure comprises 381 residues: Tryptophan--tRNA ligase (381 aa).

Residues 82 to 90 (PSLGMHIGH) carry the 'HIGH' region motif. Residues 254–258 (KMSSS) carry the 'KMSKS' region motif.

Belongs to the class-I aminoacyl-tRNA synthetase family.

It is found in the cytoplasm. It catalyses the reaction tRNA(Trp) + L-tryptophan + ATP = L-tryptophyl-tRNA(Trp) + AMP + diphosphate + H(+). This Sulfolobus acidocaldarius (strain ATCC 33909 / DSM 639 / JCM 8929 / NBRC 15157 / NCIMB 11770) protein is Tryptophan--tRNA ligase.